The primary structure comprises 125 residues: Small ribosomal subunit protein uS13 (125 aa).

The disordered stretch occupies residues 95–125; the sequence is GLPVNGQRTRTNARTRKGGKKTVANKKKVTK. The span at 105–125 shows a compositional bias: basic residues; that stretch reads TNARTRKGGKKTVANKKKVTK.

This sequence belongs to the universal ribosomal protein uS13 family. Part of the 30S ribosomal subunit. Forms a loose heterodimer with protein S19. Forms two bridges to the 50S subunit in the 70S ribosome.

Functionally, located at the top of the head of the 30S subunit, it contacts several helices of the 16S rRNA. In the 70S ribosome it contacts the 23S rRNA (bridge B1a) and protein L5 of the 50S subunit (bridge B1b), connecting the 2 subunits; these bridges are implicated in subunit movement. Contacts the tRNAs in the A and P-sites. The polypeptide is Small ribosomal subunit protein uS13 (Leptospira interrogans serogroup Icterohaemorrhagiae serovar copenhageni (strain Fiocruz L1-130)).